A 224-amino-acid polypeptide reads, in one-letter code: UPF0758 protein PFLU_5982 (224 aa).

The 123-residue stretch at 102–224 (VLESPKAVRD…PLSMAEYGWL (123 aa)) folds into the MPN domain. Zn(2+)-binding residues include His-173, His-175, and Asp-186. The JAMM motif signature appears at 173 to 186 (HNHPSGSLEPSAAD).

This sequence belongs to the UPF0758 family.

The protein is UPF0758 protein PFLU_5982 of Pseudomonas fluorescens (strain SBW25).